The primary structure comprises 145 residues: Secreted RxLR effector protein 100 (145 aa).

The N-terminal stretch at 1–19 (MRYLLLTFFTFHCQMVADA) is a signal peptide. A RxLR motif is present at residues 27–30 (RLLR). The segment at 38–77 (SGEGKIEEAGMIVTTGAPTPENETMEHNEVPQSTTDTDQK) is disordered. N-linked (GlcNAc...) asparagine glycosylation is present at Asn-59.

It belongs to the RxLR effector family.

It localises to the secreted. The protein localises to the host nucleus. Functionally, secreted effector that dos not suppress the host cell death induced by cell death-inducing proteins. The sequence is that of Secreted RxLR effector protein 100 from Plasmopara viticola (Downy mildew of grapevine).